The primary structure comprises 595 residues: Arginine--tRNA ligase (595 aa).

The short motif at Ala-132 to His-142 is the 'HIGH' region element.

It belongs to the class-I aminoacyl-tRNA synthetase family. Monomer.

Its subcellular location is the cytoplasm. The catalysed reaction is tRNA(Arg) + L-arginine + ATP = L-arginyl-tRNA(Arg) + AMP + diphosphate. This chain is Arginine--tRNA ligase, found in Cupriavidus pinatubonensis (strain JMP 134 / LMG 1197) (Cupriavidus necator (strain JMP 134)).